Consider the following 37-residue polypeptide: Cytochrome b6-f complex subunit 5 (37 aa).

A helical transmembrane segment spans residues 5–25 (FLFGIVLGLIPVTLAGLFVTA).

This sequence belongs to the PetG family. The 4 large subunits of the cytochrome b6-f complex are cytochrome b6, subunit IV (17 kDa polypeptide, PetD), cytochrome f and the Rieske protein, while the 4 small subunits are PetG, PetL, PetM and PetN. The complex functions as a dimer.

The protein resides in the plastid. It localises to the chloroplast thylakoid membrane. Component of the cytochrome b6-f complex, which mediates electron transfer between photosystem II (PSII) and photosystem I (PSI), cyclic electron flow around PSI, and state transitions. PetG is required for either the stability or assembly of the cytochrome b6-f complex. This Daucus carota (Wild carrot) protein is Cytochrome b6-f complex subunit 5.